The primary structure comprises 502 residues: Alpha-ketoglutarate-dependent dioxygenase FTO (502 aa).

The interval 32-324 (TPKDDEFYQQ…SSTHRVAECS (293 aa)) is fe2OG dioxygenase domain. Residues Arg96 and Tyr108 each coordinate substrate. Asn202 contributes to the 2-oxoglutarate binding site. Residues 210-221 (PYLKEEPYFGMG) form a loop L1; predicted to block binding of double-stranded DNA or RNA region. Lys213 carries the N6-acetyllysine modification. Fe cation-binding residues include His228 and Asp230. Residue 228–231 (HHDE) participates in substrate binding. Tyr292 provides a ligand contact to 2-oxoglutarate. His304 is a Fe cation binding site. 2-oxoglutarate is bound by residues 313 to 315 (RFS), Thr317, and Arg319.

It belongs to the fto family. Monomer. May also exist as homodimer. Requires Fe(2+) as cofactor. As to expression, ubiquitous. Detected in brain, brain cortex, hypothalamus, cerebellum, liver, pancreas, heart, kidney, white adipose tissue and skeletal muscle. Most abundant in the brain, particularly in hypothalamic nuclei governing energy balance.

Its subcellular location is the nucleus. It is found in the nucleus speckle. It localises to the cytoplasm. The catalysed reaction is a 5'-end (N(7)-methyl 5'-triphosphoguanosine)-(N(6),2'-O-dimethyladenosine) in mRNA + 2-oxoglutarate + O2 = a 5'-end (N(7)-methyl 5'-triphosphoguanosine)-(2'-O-methyladenosine) in mRNA + formaldehyde + succinate + CO2. The enzyme catalyses an N(6)-methyladenosine in mRNA + 2-oxoglutarate + O2 = an adenosine in mRNA + formaldehyde + succinate + CO2. It carries out the reaction N(6)-methyladenosine in U6 snRNA + 2-oxoglutarate + O2 = adenosine in U6 snRNA + formaldehyde + succinate + CO2. It catalyses the reaction a 5'-end (N(7)-methyl 5'-triphosphoguanosine)-(N(6),2'-O-dimethyladenosine) in U6 snRNA + 2-oxoglutarate + O2 = a 5'-end (N(7)-methyl 5'-triphosphoguanosine)-(2'-O-methyladenosine) in U6 snRNA + formaldehyde + succinate + CO2. The catalysed reaction is an N(1)-methyladenosine in tRNA + 2-oxoglutarate + O2 = an adenosine in tRNA + formaldehyde + succinate + CO2. With respect to regulation, activated by ascorbate. Inhibited by N-oxalylglycine, fumarate and succinate. RNA demethylase that mediates oxidative demethylation of different RNA species, such as mRNAs, tRNAs and snRNAs, and acts as a regulator of fat mass, adipogenesis and energy homeostasis. Specifically demethylates N(6)-methyladenosine (m6A) RNA, the most prevalent internal modification of messenger RNA (mRNA) in higher eukaryotes. M6A demethylation by FTO affects mRNA expression and stability. Also able to demethylate m6A in U6 small nuclear RNA (snRNA). Mediates demethylation of N(6),2'-O-dimethyladenosine cap (m6A(m)), by demethylating the N(6)-methyladenosine at the second transcribed position of mRNAs and U6 snRNA. Demethylation of m6A(m) in the 5'-cap by FTO affects mRNA stability by promoting susceptibility to decapping. Also acts as a tRNA demethylase by removing N(1)-methyladenine from various tRNAs. Has no activity towards 1-methylguanine. Has no detectable activity towards double-stranded DNA. Also able to repair alkylated DNA and RNA by oxidative demethylation: demethylates single-stranded RNA containing 3-methyluracil, single-stranded DNA containing 3-methylthymine and has low demethylase activity towards single-stranded DNA containing 1-methyladenine or 3-methylcytosine. Ability to repair alkylated DNA and RNA is however unsure in vivo. Involved in the regulation of fat mass, adipogenesis and body weight, thereby contributing to the regulation of body size and body fat accumulation. Involved in the regulation of thermogenesis and the control of adipocyte differentiation into brown or white fat cells. Regulates activity of the dopaminergic midbrain circuitry via its ability to demethylate m6A in mRNAs. This is Alpha-ketoglutarate-dependent dioxygenase FTO from Mus musculus (Mouse).